Here is a 432-residue protein sequence, read N- to C-terminus: NADH-quinone oxidoreductase subunit D (432 aa).

It belongs to the complex I 49 kDa subunit family. NDH-1 is composed of 14 different subunits. Subunits NuoB, C, D, E, F, and G constitute the peripheral sector of the complex.

It is found in the cell membrane. The enzyme catalyses a quinone + NADH + 5 H(+)(in) = a quinol + NAD(+) + 4 H(+)(out). NDH-1 shuttles electrons from NADH, via FMN and iron-sulfur (Fe-S) centers, to quinones in the respiratory chain. The immediate electron acceptor for the enzyme in this species is believed to be a menaquinone. Couples the redox reaction to proton translocation (for every two electrons transferred, four hydrogen ions are translocated across the cytoplasmic membrane), and thus conserves the redox energy in a proton gradient. This chain is NADH-quinone oxidoreductase subunit D, found in Mycobacteroides abscessus (strain ATCC 19977 / DSM 44196 / CCUG 20993 / CIP 104536 / JCM 13569 / NCTC 13031 / TMC 1543 / L948) (Mycobacterium abscessus).